Reading from the N-terminus, the 384-residue chain is L-cysteine:1D-myo-inositol 2-amino-2-deoxy-alpha-D-glucopyranoside ligase (384 aa).

Cys16 contacts Zn(2+). Residues Cys16–Thr19, Thr31, and Asn54–Thr56 each bind L-cysteinyl-5'-AMP. A 'HIGH' region motif is present at residues Ile18–His28. The short motif at Gln159 to Pro164 is the 'ERGGDP' region element. L-cysteinyl-5'-AMP is bound at residue Trp199. Cys203 provides a ligand contact to Zn(2+). Residue Gly221–Asp223 coordinates L-cysteinyl-5'-AMP. His228 contacts Zn(2+). Position 255 (Ile255) interacts with L-cysteinyl-5'-AMP. Positions Lys261 to Ser265 match the 'KMSKS' region motif.

It belongs to the class-I aminoacyl-tRNA synthetase family. MshC subfamily. In terms of assembly, monomer. The cofactor is Zn(2+).

The catalysed reaction is 1D-myo-inositol 2-amino-2-deoxy-alpha-D-glucopyranoside + L-cysteine + ATP = 1D-myo-inositol 2-(L-cysteinylamino)-2-deoxy-alpha-D-glucopyranoside + AMP + diphosphate + H(+). Functionally, catalyzes the ATP-dependent condensation of GlcN-Ins and L-cysteine to form L-Cys-GlcN-Ins. This Mycobacterium leprae (strain Br4923) protein is L-cysteine:1D-myo-inositol 2-amino-2-deoxy-alpha-D-glucopyranoside ligase.